A 119-amino-acid polypeptide reads, in one-letter code: Large ribosomal subunit protein uL24 (119 aa).

It belongs to the universal ribosomal protein uL24 family. In terms of assembly, part of the 50S ribosomal subunit.

One of two assembly initiator proteins, it binds directly to the 5'-end of the 23S rRNA, where it nucleates assembly of the 50S subunit. Its function is as follows. One of the proteins that surrounds the polypeptide exit tunnel on the outside of the subunit. The polypeptide is Large ribosomal subunit protein uL24 (Clavibacter sepedonicus (Clavibacter michiganensis subsp. sepedonicus)).